The primary structure comprises 292 residues: ATP synthase gamma chain (292 aa).

Belongs to the ATPase gamma chain family. F-type ATPases have 2 components, CF(1) - the catalytic core - and CF(0) - the membrane proton channel. CF(1) has five subunits: alpha(3), beta(3), gamma(1), delta(1), epsilon(1). CF(0) has three main subunits: a, b and c.

The protein resides in the cell inner membrane. Produces ATP from ADP in the presence of a proton gradient across the membrane. The gamma chain is believed to be important in regulating ATPase activity and the flow of protons through the CF(0) complex. The polypeptide is ATP synthase gamma chain (Chlorobaculum tepidum (strain ATCC 49652 / DSM 12025 / NBRC 103806 / TLS) (Chlorobium tepidum)).